Here is a 238-residue protein sequence, read N- to C-terminus: Purine nucleoside phosphorylase DeoD-type (238 aa).

Residue His-5 participates in a purine D-ribonucleoside binding. Phosphate is bound by residues Gly-21, Arg-25, Arg-44, and 88 to 91; that span reads RIGS. A purine D-ribonucleoside is bound by residues 180 to 182 and 204 to 205; these read EME and SD. The Proton donor role is filled by Asp-205.

Belongs to the PNP/UDP phosphorylase family. Homohexamer; trimer of homodimers.

The catalysed reaction is a purine D-ribonucleoside + phosphate = a purine nucleobase + alpha-D-ribose 1-phosphate. It carries out the reaction a purine 2'-deoxy-D-ribonucleoside + phosphate = a purine nucleobase + 2-deoxy-alpha-D-ribose 1-phosphate. Its function is as follows. Catalyzes the reversible phosphorolytic breakdown of the N-glycosidic bond in the beta-(deoxy)ribonucleoside molecules, with the formation of the corresponding free purine bases and pentose-1-phosphate. This is Purine nucleoside phosphorylase DeoD-type from Xenorhabdus nematophila (strain ATCC 19061 / DSM 3370 / CCUG 14189 / LMG 1036 / NCIMB 9965 / AN6).